A 978-amino-acid chain; its full sequence is Mineralocorticoid receptor (978 aa).

The interval 1 to 602 (METKGYHSLP…STGSSRPSKI (602 aa)) is modulating. Residues 234–243 (SLTCSPSVEN) show a composition bias toward polar residues. Disordered stretches follow at residues 234–331 (SLTC…STVG) and 353–372 (GAIQDMVPSPDTHEKGAHDV). Residues Ser250, Ser259, Ser283, Ser287, and Ser299 each carry the phosphoserine modification. Over residues 259–300 (SPLSSPLSSMKSPISSPPSHCSVKSPVSSPNNVPLRSSVSSP) the composition is skewed to low complexity. Residues 301 to 331 (ANLNNSRCSVSSPSNTNNRSTLSSPTASTVG) show a composition bias toward polar residues. Positions 603, 606, 620, 623, 637, 643, 653, and 656 each coordinate Zn(2+). NR C4-type zinc fingers lie at residues 603–623 (CLVCGDEASGCHYGVVTCGSC) and 637–661 (CAGRNDCIIDKIRRKNCPACRLQKC). A DNA-binding region (nuclear receptor) is located at residues 603-666 (CLVCGDEASG…RLQKCLQAGM (64 aa)). A hinge region spans residues 667-719 (NLGARKSKKLGKLKGLHEEQPQQPPPPPPQSPEEGTTYIAPTKEPSVNSALVP). Residues 681–706 (GLHEEQPQQPPPPPPQSPEEGTTYIA) form a disordered region. The segment covering 688–697 (QQPPPPPPQS) has biased composition (pro residues). The NR LBD domain occupies 720-958 (QLASITRALT…EFPAMLVEII (239 aa)). 2 residues coordinate 21-hydroxyprogesterone: Asn764 and Gln770. Residues Asn764 and Gln770 each contribute to the aldosterone site. Progesterone is bound by residues Asn764 and Gln770. The important for coactivator binding stretch occupies residues 776-779 (KWAK). The 21-hydroxyprogesterone site is built by Arg811 and Thr939. Arg811 and Thr939 together coordinate aldosterone. Arg811 and Thr939 together coordinate progesterone.

It belongs to the nuclear hormone receptor family. NR3 subfamily. Heteromultimeric cytoplasmic complex with HSP90, HSP70, and FKBP4, in the absence of ligand. After ligand binding, it translocates to the nucleus and binds to DNA as a homodimer and as a heterodimer with NR3C1. Binds the coactivator NCOA2. May interact with HSD11B2 in the absence of ligand. Binds the coactivators NCOA1, TIF1 and NRIP1. In terms of processing, phosphorylated. As to expression, expressed in heart and kidney.

It is found in the cytoplasm. It localises to the nucleus. The protein localises to the endoplasmic reticulum membrane. Receptor for both mineralocorticoids (MC) such as aldosterone and glucocorticoids (GC) such as corticosterone or cortisol. Binds to mineralocorticoid response elements (MRE) and transactivates target genes. The effect of MC is to increase ion and water transport and thus raise extracellular fluid volume and blood pressure and lower potassium levels. This is Mineralocorticoid receptor (Nr3c2) from Mus musculus (Mouse).